An 828-amino-acid polypeptide reads, in one-letter code: Periplasmic nitrate reductase (828 aa).

Positions 1–33 (MKLSRRDFMKANAAVAAAAAAGLTIPTVVQAAA) form a signal peptide, tat-type signal. The 4Fe-4S Mo/W bis-MGD-type domain maps to 39–95 (IKWDKAPCRFCGTGCGVLVGTQNGRIVASQGDPEAAVNRGLSCIKGYFLPKIMYGKD). The [4Fe-4S] cluster site is built by cysteine 46, cysteine 49, cysteine 53, and cysteine 81. Mo-bis(molybdopterin guanine dinucleotide) is bound by residues lysine 83, glutamine 150, asparagine 175, cysteine 179, 212–219 (WGSNMAEM), 243–247 (STFEH), 262–264 (QTD), methionine 372, glutamine 376, asparagine 482, 508–509 (SD), lysine 531, aspartate 558, and 718–727 (TGRVLEHWHT). Phenylalanine 794 serves as a coordination point for substrate. Residues asparagine 802 and lysine 819 each coordinate Mo-bis(molybdopterin guanine dinucleotide).

It belongs to the prokaryotic molybdopterin-containing oxidoreductase family. NasA/NapA/NarB subfamily. Component of the periplasmic nitrate reductase NapAB complex composed of NapA and NapB. [4Fe-4S] cluster is required as a cofactor. Mo-bis(molybdopterin guanine dinucleotide) serves as cofactor. Predicted to be exported by the Tat system. The position of the signal peptide cleavage has not been experimentally proven.

Its subcellular location is the periplasm. The enzyme catalyses 2 Fe(II)-[cytochrome] + nitrate + 2 H(+) = 2 Fe(III)-[cytochrome] + nitrite + H2O. Catalytic subunit of the periplasmic nitrate reductase complex NapAB. Receives electrons from NapB and catalyzes the reduction of nitrate to nitrite. The sequence is that of Periplasmic nitrate reductase from Serratia proteamaculans (strain 568).